The chain runs to 93 residues: Putative pterin-4-alpha-carbinolamine dehydratase (93 aa).

It belongs to the pterin-4-alpha-carbinolamine dehydratase family.

It carries out the reaction (4aS,6R)-4a-hydroxy-L-erythro-5,6,7,8-tetrahydrobiopterin = (6R)-L-erythro-6,7-dihydrobiopterin + H2O. This is Putative pterin-4-alpha-carbinolamine dehydratase from Nostoc sp. (strain PCC 7120 / SAG 25.82 / UTEX 2576).